The sequence spans 299 residues: 4-diphosphocytidyl-2-C-methyl-D-erythritol kinase (299 aa).

Lys-19 is an active-site residue. 110-120 (PVASGIGGGSA) lines the ATP pocket. Residue Asp-152 is part of the active site.

This sequence belongs to the GHMP kinase family. IspE subfamily.

It carries out the reaction 4-CDP-2-C-methyl-D-erythritol + ATP = 4-CDP-2-C-methyl-D-erythritol 2-phosphate + ADP + H(+). The protein operates within isoprenoid biosynthesis; isopentenyl diphosphate biosynthesis via DXP pathway; isopentenyl diphosphate from 1-deoxy-D-xylulose 5-phosphate: step 3/6. Functionally, catalyzes the phosphorylation of the position 2 hydroxy group of 4-diphosphocytidyl-2C-methyl-D-erythritol. This is 4-diphosphocytidyl-2-C-methyl-D-erythritol kinase from Agrobacterium fabrum (strain C58 / ATCC 33970) (Agrobacterium tumefaciens (strain C58)).